A 327-amino-acid chain; its full sequence is Transcription factor bHLH71 (327 aa).

Disordered stretches follow at residues 46–88 (ISEI…NQRM) and 151–176 (AKLN…HQPS). The segment covering 65–76 (RGKKRRRRKPRV) has biased composition (basic residues). Over residues 77–88 (CKNEEEAENQRM) the composition is skewed to basic and acidic residues. The bHLH domain maps to 85-136 (NQRMTHIAVERNRRRQMNQHLSVLRSLMPQPFAHKGDQASIVGGAIDFIKEL). Over residues 152-169 (KLNQSVTSSTSQDSNGEQ) the composition is skewed to polar residues.

As to quaternary structure, homodimer. Interacts with FAMA. Expressed in leaves, stems, and flowers.

The protein resides in the nucleus. Transcription factor. May be involved in the differentiation of stomatal guard cells. In Arabidopsis thaliana (Mouse-ear cress), this protein is Transcription factor bHLH71 (BHLH71).